A 1495-amino-acid polypeptide reads, in one-letter code: Chromosome partition protein MukB (1495 aa).

60–67 contacts ATP; that stretch reads GGNGAGKS. Coiled-coil stretches lie at residues 322 to 693, 861 to 1140, and 1233 to 1289; these read RART…SQPD, EDVM…AKVS, and IDAI…LQNI. The segment at 692–809 is flexible hinge; it reads PDGSEDARLN…EIPLFGRAAR (118 aa).

This sequence belongs to the SMC family. MukB subfamily. As to quaternary structure, homodimerization via its hinge domain. Binds to DNA via its C-terminal region. Interacts, and probably forms a ternary complex, with MukE and MukF via its C-terminal region. The complex formation is stimulated by calcium or magnesium. Interacts with tubulin-related protein FtsZ.

The protein localises to the cytoplasm. Its subcellular location is the nucleoid. Its function is as follows. Plays a central role in chromosome condensation, segregation and cell cycle progression. Functions as a homodimer, which is essential for chromosome partition. Involved in negative DNA supercoiling in vivo, and by this means organize and compact chromosomes. May achieve or facilitate chromosome segregation by condensation DNA from both sides of a centrally located replisome during cell division. This is Chromosome partition protein MukB from Pasteurella multocida (strain Pm70).